Reading from the N-terminus, the 104-residue chain is L-rhamnose mutarotase (104 aa).

A substrate-binding site is contributed by Tyr-18. The active-site Proton donor is His-22. Residues Tyr-41 and 76-77 (WW) each bind substrate.

The protein belongs to the rhamnose mutarotase family. In terms of assembly, homodimer.

The protein localises to the cytoplasm. It catalyses the reaction alpha-L-rhamnose = beta-L-rhamnose. It functions in the pathway carbohydrate metabolism; L-rhamnose metabolism. Its function is as follows. Involved in the anomeric conversion of L-rhamnose. In Salmonella newport (strain SL254), this protein is L-rhamnose mutarotase.